A 100-amino-acid chain; its full sequence is Small ribosomal subunit protein uS14c (100 aa).

This sequence belongs to the universal ribosomal protein uS14 family. Part of the 30S ribosomal subunit.

It is found in the plastid. It localises to the chloroplast. Its function is as follows. Binds 16S rRNA, required for the assembly of 30S particles. In Citrus sinensis (Sweet orange), this protein is Small ribosomal subunit protein uS14c.